The sequence spans 428 residues: 47 kDa outer membrane protein (428 aa).

A signal peptide spans 1–25 (MAKTSKFTQTLLASALAVVAGSASA).

The protein belongs to the OmpP1/FadL family.

The protein localises to the cell outer membrane. The chain is 47 kDa outer membrane protein from Pasteurella multocida (strain Pm70).